The chain runs to 172 residues: Adenine phosphoribosyltransferase (172 aa).

It belongs to the purine/pyrimidine phosphoribosyltransferase family. In terms of assembly, homodimer.

Its subcellular location is the cytoplasm. The enzyme catalyses AMP + diphosphate = 5-phospho-alpha-D-ribose 1-diphosphate + adenine. Its pathway is purine metabolism; AMP biosynthesis via salvage pathway; AMP from adenine: step 1/1. In terms of biological role, catalyzes a salvage reaction resulting in the formation of AMP, that is energically less costly than de novo synthesis. The polypeptide is Adenine phosphoribosyltransferase (Microcystis aeruginosa (strain NIES-843 / IAM M-2473)).